The sequence spans 195 residues: Imidazoleglycerol-phosphate dehydratase (195 aa).

It belongs to the imidazoleglycerol-phosphate dehydratase family.

The protein resides in the cytoplasm. It carries out the reaction D-erythro-1-(imidazol-4-yl)glycerol 3-phosphate = 3-(imidazol-4-yl)-2-oxopropyl phosphate + H2O. Its pathway is amino-acid biosynthesis; L-histidine biosynthesis; L-histidine from 5-phospho-alpha-D-ribose 1-diphosphate: step 6/9. This chain is Imidazoleglycerol-phosphate dehydratase, found in Leuconostoc mesenteroides subsp. mesenteroides (strain ATCC 8293 / DSM 20343 / BCRC 11652 / CCM 1803 / JCM 6124 / NCDO 523 / NBRC 100496 / NCIMB 8023 / NCTC 12954 / NRRL B-1118 / 37Y).